A 92-amino-acid chain; its full sequence is Small ribosomal subunit protein bS18 (92 aa).

The protein belongs to the bacterial ribosomal protein bS18 family. In terms of assembly, part of the 30S ribosomal subunit. Forms a tight heterodimer with protein bS6.

Its function is as follows. Binds as a heterodimer with protein bS6 to the central domain of the 16S rRNA, where it helps stabilize the platform of the 30S subunit. In Chlorobium chlorochromatii (strain CaD3), this protein is Small ribosomal subunit protein bS18.